A 346-amino-acid polypeptide reads, in one-letter code: Phosphoribosylformylglycinamidine cyclo-ligase (346 aa).

It belongs to the AIR synthase family.

The protein resides in the cytoplasm. It catalyses the reaction 2-formamido-N(1)-(5-O-phospho-beta-D-ribosyl)acetamidine + ATP = 5-amino-1-(5-phospho-beta-D-ribosyl)imidazole + ADP + phosphate + H(+). Its pathway is purine metabolism; IMP biosynthesis via de novo pathway; 5-amino-1-(5-phospho-D-ribosyl)imidazole from N(2)-formyl-N(1)-(5-phospho-D-ribosyl)glycinamide: step 2/2. The sequence is that of Phosphoribosylformylglycinamidine cyclo-ligase from Vibrio atlanticus (strain LGP32) (Vibrio splendidus (strain Mel32)).